The chain runs to 389 residues: tRNA (guanine-N(7)-)-methyltransferase non-catalytic subunit TRM82 (389 aa).

WD repeat units follow at residues glutamine 44 to lysine 86, glycine 134 to leucine 179, and glutamine 184 to glutamate 222.

It belongs to the WD repeat TRM82 family. As to quaternary structure, forms a heterodimer with the catalytic subunit TRM8.

It is found in the nucleus. Its pathway is tRNA modification; N(7)-methylguanine-tRNA biosynthesis. Functionally, required for the formation of N(7)-methylguanine at position 46 (m7G46) in tRNA. In the complex, it is required to stabilize and induce conformational changes of the catalytic subunit. This Lodderomyces elongisporus (strain ATCC 11503 / CBS 2605 / JCM 1781 / NBRC 1676 / NRRL YB-4239) (Yeast) protein is tRNA (guanine-N(7)-)-methyltransferase non-catalytic subunit TRM82.